Here is a 153-residue protein sequence, read N- to C-terminus: MRCPFCGQDDTQVKDSRPTDDNAAIRRRRACPGCGSRFTTFERVQIRDLVVVKKDGSRSTFDREKVVKSLQIALRKRPVEDDQIERIANGIYRRLESLGENEVPSKLIGELVMDVLMEMDQVAYLRYASVYRNFREAKDFGDFLGKMGTSSGD.

Residues 3–34 (CPFCGQDDTQVKDSRPTDDNAAIRRRRACPGC) fold into a zinc finger. The 91-residue stretch at 49 to 139 (LVVVKKDGSR…VYRNFREAKD (91 aa)) folds into the ATP-cone domain.

Belongs to the NrdR family. The cofactor is Zn(2+).

Its function is as follows. Negatively regulates transcription of bacterial ribonucleotide reductase nrd genes and operons by binding to NrdR-boxes. The sequence is that of Transcriptional repressor NrdR 2 from Paramagnetospirillum magneticum (strain ATCC 700264 / AMB-1) (Magnetospirillum magneticum).